The sequence spans 255 residues: Thiazole synthase (255 aa).

K96 functions as the Schiff-base intermediate with DXP in the catalytic mechanism. 1-deoxy-D-xylulose 5-phosphate contacts are provided by residues G157, 183–184, and 205–206; these read AG and NT.

The protein belongs to the ThiG family. As to quaternary structure, homotetramer. Forms heterodimers with either ThiH or ThiS.

Its subcellular location is the cytoplasm. The enzyme catalyses [ThiS sulfur-carrier protein]-C-terminal-Gly-aminoethanethioate + 2-iminoacetate + 1-deoxy-D-xylulose 5-phosphate = [ThiS sulfur-carrier protein]-C-terminal Gly-Gly + 2-[(2R,5Z)-2-carboxy-4-methylthiazol-5(2H)-ylidene]ethyl phosphate + 2 H2O + H(+). Its pathway is cofactor biosynthesis; thiamine diphosphate biosynthesis. Functionally, catalyzes the rearrangement of 1-deoxy-D-xylulose 5-phosphate (DXP) to produce the thiazole phosphate moiety of thiamine. Sulfur is provided by the thiocarboxylate moiety of the carrier protein ThiS. In vitro, sulfur can be provided by H(2)S. This chain is Thiazole synthase, found in Staphylococcus epidermidis (strain ATCC 35984 / DSM 28319 / BCRC 17069 / CCUG 31568 / BM 3577 / RP62A).